The chain runs to 352 residues: C-C chemokine receptor type 5 (352 aa).

The Extracellular segment spans residues 1–30; it reads MDYQVSSPTYDIDYYTSEPCQKVNVKQIAA. Tyr-3 carries the post-translational modification Sulfotyrosine. 2 O-linked (GalNAc...) serine glycosylation sites follow: Ser-6 and Ser-7. Residues Tyr-10, Tyr-14, and Tyr-15 each carry the sulfotyrosine modification. 2 disulfide bridges follow: Cys-20–Cys-269 and Cys-101–Cys-178. A helical membrane pass occupies residues 31-58; the sequence is RLLPPLYSLVFIFGFVGNILVVLILINC. The Cytoplasmic portion of the chain corresponds to 59 to 68; sequence KRLKSMTDIY. Residues 69–89 traverse the membrane as a helical segment; that stretch reads LLNLAISDLFFLLTVPFWAHY. Residues 90–102 are Extracellular-facing; it reads AAAQWDFGNTMCQ. The helical transmembrane segment at 103–124 threads the bilayer; the sequence is LLTGLYFIGFFSGIFFIILLTI. Residues 125-141 are Cytoplasmic-facing; sequence DRYLAIVHAVFALKART. Residues 142 to 166 traverse the membrane as a helical segment; that stretch reads VTFGVVTSVITWVVAVFASLPGIIF. Residues 167–198 are Extracellular-facing; sequence TRSQREGLHYTCSSHFPYSQYQFWKNFQTLKI. A helical membrane pass occupies residues 199 to 218; the sequence is VILGLVLPLLVMVICYSGIL. Residues 219 to 235 lie on the Cytoplasmic side of the membrane; sequence KTLLRCRNEKKRHRAVR. The chain crosses the membrane as a helical span at residues 236–260; sequence LIFTIMIVYFLFWAPYNIVLLLNTF. Residues 261–277 are Extracellular-facing; that stretch reads QEFFGLNNCSSSNRLDQ. Residues 278-301 form a helical membrane-spanning segment; it reads AMQVTETLGMTHCCINPIIYAFVG. Residues 302-352 lie on the Cytoplasmic side of the membrane; the sequence is EKFRNYLLVFFQKHIAKRFCKCCRIFQQEAPERASSVYTRSTGEQEISVGL. 3 S-palmitoyl cysteine lipidation sites follow: Cys-321, Cys-323, and Cys-324. Residues Ser-336, Ser-337, Ser-342, and Ser-349 each carry the phosphoserine; by BARK1 modification.

It belongs to the G-protein coupled receptor 1 family. In terms of assembly, interacts with PRAF2. Efficient ligand binding to CCL3/MIP-1alpha and CCL4/MIP-1beta requires sulfation, O-glycosylation and sialic acid modifications. Glycosylation on Ser-6 is required for efficient binding of CCL4. Interacts with GRK2. Interacts with ARRB1 and ARRB2. Interacts with CNIH4. Interacts with S100A4; this interaction stimulates T-lymphocyte chemotaxis. Sulfated on at least 2 of the N-terminal tyrosines. Sulfation is required for efficient binding of the chemokines, CCL3 and CCL4. Post-translationally, palmitoylation in the C-terminal is important for cell surface expression. In terms of processing, phosphorylation on serine residues in the C-terminal is stimulated by binding CC chemokines especially by APO-RANTES. O-glycosylated, but not N-glycosylated. Ser-6 appears to be the major site even if Ser-7 may be also O-glycosylated. Also sialylated glycans present which contribute to chemokine binding. Thr-16 and Ser-17 may also be glycosylated and, if so, with small moieties such as a T-antigen.

The protein localises to the cell membrane. Its function is as follows. Receptor for a number of inflammatory CC-chemokines including CCL3/MIP-1-alpha, CCL4/MIP-1-beta and RANTES and subsequently transduces a signal by increasing the intracellular calcium ion level. May play a role in the control of granulocytic lineage proliferation or differentiation. Participates in T-lymphocyte migration to the infection site by acting as a chemotactic receptor. The chain is C-C chemokine receptor type 5 (CCR5) from Colobus polykomos (Western black-and-white colobus monkey).